A 305-amino-acid polypeptide reads, in one-letter code: Ubiquinone biosynthesis protein COQ4 homolog, mitochondrial (305 aa).

4 residues coordinate Zn(2+): His150, Asp151, His154, and Glu166.

It belongs to the COQ4 family. Component of a multi-subunit COQ enzyme complex. Requires Zn(2+) as cofactor.

It is found in the mitochondrion inner membrane. The enzyme catalyses a 4-hydroxy-3-methoxy-5-(all-trans-polyprenyl)benzoate + H(+) = a 2-methoxy-6-(all-trans-polyprenyl)phenol + CO2. The protein operates within cofactor biosynthesis; ubiquinone biosynthesis. Its function is as follows. Lyase that catalyzes the C1-decarboxylation of 4-hydroxy-3-methoxy-5-(all-trans-polyprenyl)benzoic acid into 2-methoxy-6-(all-trans-polyprenyl)phenol during ubiquinone biosynthesis. The sequence is that of Ubiquinone biosynthesis protein COQ4 homolog, mitochondrial from Cryptosporidium parvum (strain Iowa II).